A 232-amino-acid chain; its full sequence is 2-C-methyl-D-erythritol 4-phosphate cytidylyltransferase (232 aa).

Belongs to the IspD/TarI cytidylyltransferase family. IspD subfamily.

It carries out the reaction 2-C-methyl-D-erythritol 4-phosphate + CTP + H(+) = 4-CDP-2-C-methyl-D-erythritol + diphosphate. It participates in isoprenoid biosynthesis; isopentenyl diphosphate biosynthesis via DXP pathway; isopentenyl diphosphate from 1-deoxy-D-xylulose 5-phosphate: step 2/6. Functionally, catalyzes the formation of 4-diphosphocytidyl-2-C-methyl-D-erythritol from CTP and 2-C-methyl-D-erythritol 4-phosphate (MEP). In Vibrio cholerae serotype O1 (strain ATCC 39315 / El Tor Inaba N16961), this protein is 2-C-methyl-D-erythritol 4-phosphate cytidylyltransferase.